A 96-amino-acid polypeptide reads, in one-letter code: Prokineticin Bo8 (96 aa).

An N-terminal signal peptide occupies residues 1-19; that stretch reads MKCFAQIVVLLLVIAFSHG. 5 cysteine pairs are disulfide-bonded: Cys-26–Cys-38, Cys-32–Cys-50, Cys-37–Cys-78, Cys-60–Cys-86, and Cys-80–Cys-95.

Expressed by the skin glands.

It is found in the secreted. Its function is as follows. Potent agonist for both PKR1/PROKR1 and PKR2/PROKR2, and inducer of a potent and long-lasting hyperalgesia. Also potentiates capsaicin-induced TRPV1 current, when tested on DRG neurons. At subnanomolar concentrations, this protein both induces potent chemotaxis of macrophages and stimulates LPS-induced production of the pro-inflammatory cytokines IL-1 and IL-12. In vivo, potently stimulates the contraction of the guinea-pig gastrointestinal (GI) smooth muscle (nanomolar concentration). The polypeptide is Prokineticin Bo8 (Bombina orientalis (Oriental fire-bellied toad)).